We begin with the raw amino-acid sequence, 335 residues long: Putative zinc metalloprotease CPE1693 (335 aa).

Residue His17 participates in Zn(2+) binding. Glu18 is a catalytic residue. His21 is a Zn(2+) binding site. 3 helical membrane-spanning segments follow: residues 88 to 110 (ILVM…IGLA), 262 to 284 (LLWF…FPAL), and 312 to 334 (TVGF…IFPI). The 79-residue stretch at 96–174 (FMNYVLALII…PVELEIKRGN (79 aa)) folds into the PDZ domain.

This sequence belongs to the peptidase M50B family. Zn(2+) is required as a cofactor.

The protein localises to the cell membrane. The sequence is that of Putative zinc metalloprotease CPE1693 from Clostridium perfringens (strain 13 / Type A).